Here is a 337-residue protein sequence, read N- to C-terminus: Protein BIG GRAIN 1-like (337 aa).

3 disordered regions span residues 1–32 (MRDM…PSFS), 120–163 (SAAG…RPAS), and 179–233 (KRPS…ARPS). Residues 137-146 (HEQPDVEKTA) show a composition bias toward basic and acidic residues. Composition is skewed to low complexity over residues 150-163 (PGSA…RPAS), 195-209 (PACS…SSYA), and 219-230 (RTPPTTTTTARA).

Belongs to the BIG GRAIN 1 (BG1) plant protein family.

Its subcellular location is the cell membrane. Its function is as follows. Involved in auxin transport. Regulator of the auxin signaling pathway. The protein is Protein BIG GRAIN 1-like of Oryza sativa subsp. indica (Rice).